A 401-amino-acid polypeptide reads, in one-letter code: Phosphoglycerate kinase (401 aa).

Substrate is bound by residues 20-22 (DFN), arginine 35, 58-61 (HLGR), arginine 117, and arginine 154. ATP contacts are provided by residues lysine 204, glycine 298, glutamate 329, and 358 to 361 (GGDS).

The protein belongs to the phosphoglycerate kinase family. In terms of assembly, monomer.

Its subcellular location is the cytoplasm. The catalysed reaction is (2R)-3-phosphoglycerate + ATP = (2R)-3-phospho-glyceroyl phosphate + ADP. It participates in carbohydrate degradation; glycolysis; pyruvate from D-glyceraldehyde 3-phosphate: step 2/5. The polypeptide is Phosphoglycerate kinase (Bifidobacterium longum (strain NCC 2705)).